The sequence spans 160 residues: UPF0262 protein ELI_10965 (160 aa).

It belongs to the UPF0262 family.

The protein is UPF0262 protein ELI_10965 of Erythrobacter litoralis (strain HTCC2594).